Here is a 305-residue protein sequence, read N- to C-terminus: Protoheme IX farnesyltransferase 1 (305 aa).

9 consecutive transmembrane segments (helical) span residues Ile-30–Phe-50, Leu-59–Met-79, Phe-108–Ser-128, Phe-129–Trp-149, His-154–Val-176, Leu-180–Leu-202, Leu-232–Phe-252, Leu-253–Ala-273, and Phe-284–Phe-304.

This sequence belongs to the UbiA prenyltransferase family. Protoheme IX farnesyltransferase subfamily. As to quaternary structure, interacts with CtaA.

It localises to the cell membrane. It catalyses the reaction heme b + (2E,6E)-farnesyl diphosphate + H2O = Fe(II)-heme o + diphosphate. It functions in the pathway porphyrin-containing compound metabolism; heme O biosynthesis; heme O from protoheme: step 1/1. Its function is as follows. Converts heme B (protoheme IX) to heme O by substitution of the vinyl group on carbon 2 of heme B porphyrin ring with a hydroxyethyl farnesyl side group. This chain is Protoheme IX farnesyltransferase 1, found in Lysinibacillus sphaericus (strain C3-41).